Reading from the N-terminus, the 424-residue chain is MSAKQVSKDEEKEALNLFLSTQTIIKEALRKLGYPGDMYELMKEPQRMLTVRIPVKMDNGSVKVFTGYRSQHNDAVGPTKGGVRFHPEVNEEEVKALSIWMTLKCGIANLPYGGGKGGIICDPRTMSFGELERLSRGYVRAISQIVGPTKDIPAPDVYTNSQIMAWMMDEYSRLREFDSPGFITGKPLVLGGSQGRETATAQGVTICIEEAVKKKGIKLQNARIIIQGFGNAGSFLAKFMHDAGAKVIGISDANGGLYNPDGLDIPYLLDKRDSFGMVTNLFTDVITNEELLEKDCDILVPAAISNQITAKNAHNIQASIVVEAANGPTTIDATKILNERGVLLVPDILASAGGVTVSYFEWVQNNQGYYWSEEEVAEKLRSVMVSSFETIYQTAATHKVDMRLAAYMTGIRKSAEASRFRGWV.

Residues Lys-80 and Lys-104 each coordinate substrate. The active-site Proton donor is Lys-116. Residues Thr-200 and Asn-231 each contribute to the NAD(+) site. Ser-358 is a binding site for substrate.

The protein belongs to the Glu/Leu/Phe/Val dehydrogenases family. In terms of assembly, homohexamer. Interacts with transcriptional regulator GltC.

The catalysed reaction is L-glutamate + NAD(+) + H2O = 2-oxoglutarate + NH4(+) + NADH + H(+). Its function is as follows. Devoted to catabolic function of glutamate (and other amino acids of the glutamate family) utilization as sole nitrogen source. It is not involved in anabolic function of glutamate biosynthesis since B.subtilis possesses only one route of glutamate biosynthesis from ammonia, catalyzed by glutamate synthase. Wild-type cells are unable to utilize glutamate or glutamine as a sole carbon source; thus RocG does not function physiologically to synthesize glutamate, but it is involved in the utilization of arginine, and proline as carbon or nitrogen source. The catabolic RocG is essential for controlling gltAB expression via an inhibitory interactions with the transcriptional regulator GltC in response to the availability of sugars. The chain is Catabolic NAD-specific glutamate dehydrogenase RocG from Bacillus subtilis (strain 168).